Consider the following 145-residue polypeptide: uncharacterized protein (145 aa).

The segment at Met1–Thr49 is disordered. The span at Asn22–Glu32 shows a compositional bias: basic and acidic residues. Over residues Arg33–Tyr42 the composition is skewed to basic residues. Ser68 is modified (phosphoserine). The Cytochrome b5 heme-binding domain maps to Pro69–Val145. Positions 104 and 127 each coordinate heme.

The protein belongs to the cytochrome b5 family.

It localises to the cytoplasm. This is an uncharacterized protein from Schizosaccharomyces pombe (strain 972 / ATCC 24843) (Fission yeast).